Consider the following 477-residue polypeptide: ACT domain-containing protein ACR1 (477 aa).

4 consecutive ACT domains span residues 38 to 124 (LIKV…REVQ), 134 to 214 (AFEI…GDVS), 283 to 358 (MVNV…RASQ), and 361 to 441 (KLEI…MMPR). Residues 329 to 345 (KKNGGTLETEGQRERLR) carry the Bipartite nuclear localization signal motif.

As to expression, expressed in flowers and siliques.

It localises to the nucleus. In terms of biological role, may bind amino acids. The chain is ACT domain-containing protein ACR1 from Arabidopsis thaliana (Mouse-ear cress).